The following is a 1531-amino-acid chain: DNA topoisomerase 2-alpha (1531 aa).

Methionine 1 is subject to N-acetylmethionine. A Phosphoserine modification is found at serine 4. Lysine 17 is covalently cross-linked (Glycyl lysine isopeptide (Lys-Gly) (interchain with G-Cter in SUMO2)). ATP-binding positions include asparagine 91, asparagine 120, and 148–150 (SSN). Glycyl lysine isopeptide (Lys-Gly) (interchain with G-Cter in SUMO2) cross-links involve residues lysine 156 and lysine 157. 161-168 (GRNGYGAK) is an ATP binding site. Residue lysine 261 forms a Glycyl lysine isopeptide (Lys-Gly) (interchain with G-Cter in SUMO2) linkage. Phosphothreonine is present on threonine 282. The interaction with DNA stretch occupies residues 342–344 (KKK). Lysine 352 participates in a covalent cross-link: Glycyl lysine isopeptide (Lys-Gly) (interchain with G-Cter in SUMO2). Residue 376-378 (QTK) coordinates ATP. Glycyl lysine isopeptide (Lys-Gly) (interchain with G-Cter in SUMO2) cross-links involve residues lysine 386, lysine 397, lysine 416, lysine 418, lysine 425, and lysine 440. The region spanning 455–572 (CTLILTEGDS…SLLRHRFLEE (118 aa)) is the Toprim domain. Mg(2+) is bound at residue glutamate 461. Residues lysine 466, lysine 480, and lysine 529 each participate in a glycyl lysine isopeptide (Lys-Gly) (interchain with G-Cter in SUMO2) cross-link. 2 residues coordinate Mg(2+): aspartate 541 and aspartate 543. Glycyl lysine isopeptide (Lys-Gly) (interchain with G-Cter in SUMO2) cross-links involve residues lysine 584, lysine 599, lysine 614, lysine 622, lysine 625, lysine 632, lysine 639, lysine 655, lysine 662, and lysine 676. Residues 715–1171 (IPSMVDGLKP…SPSDLWKEDL (457 aa)) enclose the Topo IIA-type catalytic domain. Tyrosine 805 (O-(5'-phospho-DNA)-tyrosine intermediate) is an active-site residue. Residues 990–999 (KLQTSLTCNS) form an interaction with DNA region. Positions 1018-1028 (ILRDFFELRLK) match the Nuclear export signal motif. A Glycyl lysine isopeptide (Lys-Gly) (interchain with G-Cter in SUMO2) cross-link involves residue lysine 1075. Disordered stretches follow at residues 1090-1123 (WKEAQQKVPDEEENEESDNEKETEKSDSVTDSGP) and 1184-1531 (KEKQ…DDLF). The span at 1099–1108 (DEEENEESDN) shows a compositional bias: acidic residues. Residue serine 1106 is modified to Phosphoserine; by CK1. Glycyl lysine isopeptide (Lys-Gly) (interchain with G-Cter in SUMO2) cross-links involve residues lysine 1114, lysine 1196, and lysine 1204. The residue at position 1205 (threonine 1205) is a Phosphothreonine. Residue serine 1213 is modified to Phosphoserine. A Glycyl lysine isopeptide (Lys-Gly) (interchain with G-Cter in SUMO2) cross-link involves residue lysine 1228. Lysine 1240 participates in a covalent cross-link: Glycyl lysine isopeptide (Lys-Gly) (interchain with G-Cter in SUMO1); alternate. Lysine 1240 is covalently cross-linked (Glycyl lysine isopeptide (Lys-Gly) (interchain with G-Cter in SUMO2); alternate). Residue threonine 1244 is modified to Phosphothreonine. Serine 1247 is modified (phosphoserine). The span at 1256-1272 (EGLKQRLEKKQKREPGT) shows a compositional bias: basic and acidic residues. Residues lysine 1259, lysine 1276, lysine 1283, and lysine 1286 each participate in a glycyl lysine isopeptide (Lys-Gly) (interchain with G-Cter in SUMO2) cross-link. Residues serine 1295, serine 1297, serine 1299, and serine 1302 each carry the phosphoserine modification. Threonine 1327 is subject to Phosphothreonine. Positions 1330 to 1349 (LDSDEDFSDFDEKTDDEDFV) are enriched in acidic residues. Phosphoserine is present on residues serine 1332 and serine 1337. Threonine 1343 carries the post-translational modification Phosphothreonine; by PLK3. A phosphoserine mark is found at serine 1351 and serine 1354. Glycyl lysine isopeptide (Lys-Gly) (interchain with G-Cter in SUMO2) cross-links involve residues lysine 1363, lysine 1367, and lysine 1373. Serine 1374 and serine 1377 each carry phosphoserine. Lysine 1385 is covalently cross-linked (Glycyl lysine isopeptide (Lys-Gly) (interchain with G-Cter in SUMO2)). 4 positions are modified to phosphoserine: serine 1387, serine 1391, serine 1392, and serine 1393. The span at 1406–1431 (TNPVPKKNVTVKKTAAKSQSSTSTTG) shows a compositional bias: low complexity. Lysine 1422 participates in a covalent cross-link: Glycyl lysine isopeptide (Lys-Gly) (interchain with G-Cter in SUMO2); alternate. Lysine 1422 is subject to N6-acetyllysine; alternate. Residues 1433–1439 (KKRAAPK) form an interaction with PLSCR1 region. Lysine 1442 participates in a covalent cross-link: Glycyl lysine isopeptide (Lys-Gly) (interchain with G-Cter in SUMO2); alternate. Residue lysine 1442 is modified to N6-acetyllysine; alternate. Residue serine 1449 is modified to Phosphoserine. Glycyl lysine isopeptide (Lys-Gly) (interchain with G-Cter in SUMO2) cross-links involve residues lysine 1454 and lysine 1459. At serine 1469 the chain carries Phosphoserine; by CK2. Threonine 1470 carries the phosphothreonine modification. Serine 1471, serine 1474, and serine 1476 each carry phosphoserine. Glycyl lysine isopeptide (Lys-Gly) (interchain with G-Cter in SUMO2) cross-links involve residues lysine 1484 and lysine 1492. Positions 1491-1502 (SKGESDDFHMDF) are enriched in basic and acidic residues. Serine 1495, serine 1504, and serine 1525 each carry phosphoserine.

Belongs to the type II topoisomerase family. In terms of assembly, homodimer. Interacts with COPS5. Interacts with RECQL5; this stimulates DNA decatenation. Interacts with SETMAR; stimulates the topoisomerase activity. Interacts with DHX9; this interaction occurs in a E2 enzyme UBE2I- and RNA-dependent manner, negatively regulates DHX9-mediated double-stranded DNA and RNA duplex helicase activity and stimulates TOP2A-mediated supercoiled DNA relaxation activity. Interacts with HNRNPU (via C-terminus); this interaction protects the topoisomerase TOP2A from degradation and positively regulates the relaxation of supercoiled DNA in a RNA-dependent manner. Interacts with MCM3AP isoform GANP. Interacts with ERCC6. Interacts with PLSCR1. Interacts with GCNA; this interaction allows the resolution of topoisomerase II (TOP2A) DNA-protein cross-links. Interacts with POL1RA/RPA1 (via dock II) and UBTF in the context of Pol I complex; may assist Pol I transcription initiation by releasing supercoils occurring during DNA unwinding. Interacts with TPRN; TPRN interacts with a number of DNA damage response proteins, is recruited to sites of DNA damage and may play a role in DNA damage repair. Mg(2+) is required as a cofactor. Mn(2+) serves as cofactor. The cofactor is Ca(2+). In terms of processing, phosphorylation has no effect on catalytic activity. However, phosphorylation at Ser-1106 by CSNK1D/CK1 promotes DNA cleavable complex formation. (Microbial infection) Deubiquitinated by Epstein-Barr virus BPLF1; leading to stabilized SUMOylated TOP2A trapped in cleavage complexes, which halts the DNA damage response to TOP2A-induced double-strand DNA breaks. Post-translationally, SUMOylated. As to expression, expressed in the tonsil, spleen, lymph node, thymus, skin, pancreas, testis, colon, kidney, liver, brain and lung. Also found in high-grade lymphomas, squamous cell lung tumors and seminomas.

The protein localises to the cytoplasm. It localises to the nucleus. The protein resides in the nucleoplasm. Its subcellular location is the nucleolus. The catalysed reaction is ATP-dependent breakage, passage and rejoining of double-stranded DNA.. Specifically inhibited by the intercalating agent amsacrine. Its function is as follows. Key decatenating enzyme that alters DNA topology by binding to two double-stranded DNA molecules, generating a double-stranded break in one of the strands, passing the intact strand through the broken strand, and religating the broken strand. May play a role in regulating the period length of BMAL1 transcriptional oscillation. In Homo sapiens (Human), this protein is DNA topoisomerase 2-alpha (TOP2A).